The following is a 122-amino-acid chain: Flagellar protein FliT (122 aa).

The segment at 1–50 is required for homodimerization; it reads MTSTVEFINRWQRIALLSQSLLELAQRGEWDLLLQQEVSYLQRIETVMEK. The fliD binding stretch occupies residues 60-98; the sequence is IQDMVAGYIKQTLDNEQLLKGLLQQRLDELSSLIGQSTR.

It belongs to the FliT family. Homodimer. Interacts with FliD and FlhC.

It is found in the cytoplasm. Its subcellular location is the cytosol. Its function is as follows. Dual-function protein that regulates the transcription of class 2 flagellar operons and that also acts as an export chaperone for the filament-capping protein FliD. As a transcriptional regulator, acts as an anti-FlhDC factor; it directly binds FlhC, thus inhibiting the binding of the FlhC/FlhD complex to class 2 promoters, resulting in decreased expression of class 2 flagellar operons. As a chaperone, effects FliD transition to the membrane by preventing its premature polymerization, and by directing it to the export apparatus. The protein is Flagellar protein FliT of Salmonella paratyphi A (strain AKU_12601).